Here is a 320-residue protein sequence, read N- to C-terminus: Aspartate carbamoyltransferase catalytic subunit (320 aa).

Residues R65 and T66 each contribute to the carbamoyl phosphate site. K93 lines the L-aspartate pocket. Carbamoyl phosphate-binding residues include R115, H143, and Q146. Residues R176 and R230 each coordinate L-aspartate. Positions 271 and 272 each coordinate carbamoyl phosphate.

It belongs to the aspartate/ornithine carbamoyltransferase superfamily. ATCase family. Heterododecamer (2C3:3R2) of six catalytic PyrB chains organized as two trimers (C3), and six regulatory PyrI chains organized as three dimers (R2).

The enzyme catalyses carbamoyl phosphate + L-aspartate = N-carbamoyl-L-aspartate + phosphate + H(+). The protein operates within pyrimidine metabolism; UMP biosynthesis via de novo pathway; (S)-dihydroorotate from bicarbonate: step 2/3. In terms of biological role, catalyzes the condensation of carbamoyl phosphate and aspartate to form carbamoyl aspartate and inorganic phosphate, the committed step in the de novo pyrimidine nucleotide biosynthesis pathway. The chain is Aspartate carbamoyltransferase catalytic subunit from Maricaulis maris (strain MCS10) (Caulobacter maris).